The chain runs to 86 residues: Mu-theraphotoxin-Cg2a 2 (86 aa).

Residues 1-21 (MKVSVVITLAVLGVMFVWASA) form the signal peptide. Residues 22–50 (AELEERGSDQRDSPAWIKSMERIFQSEER) constitute a propeptide that is removed on maturation. Cystine bridges form between Cys52–Cys66, Cys59–Cys71, and Cys65–Cys78. At Phe84 the chain carries Phenylalanine amide.

The protein belongs to the neurotoxin 10 (Hwtx-1) family. 37 (Jztx-31) subfamily. In terms of tissue distribution, expressed by the venom gland.

The protein localises to the secreted. Its function is as follows. Inhibits both peak current and fast inactivation of voltage-gated sodium channels (Nav) channels. Inhibits the inactivation of Nav on DRG neurons (EC(50)=1.77 uM) and peak current of cardiac myocytes (IC(50)=0.90 uM). In Chilobrachys guangxiensis (Chinese earth tiger tarantula), this protein is Mu-theraphotoxin-Cg2a 2.